A 66-amino-acid polypeptide reads, in one-letter code: Brevinin-1DYb (66 aa).

The first 22 residues, 1-22, serve as a signal peptide directing secretion; the sequence is MFTLKKSLLLLFFLGTISLSLC. Positions 23–44 are excised as a propeptide; the sequence is EEERNAEEERRDYPEERDVEVE. A disulfide bridge links Cys-60 with Cys-66.

In terms of tissue distribution, expressed by the skin glands.

The protein resides in the secreted. In terms of biological role, antimicrobial peptide. Has low activity against the Gram-positive bacterium S.aureus and the Gram-negative bacterium E.coli (MIC&lt;15 uM). Has a strong hemolytic activity. This chain is Brevinin-1DYb, found in Rana dybowskii (Dybovsky's frog).